The chain runs to 123 residues: Putative iron-sulfur cluster insertion protein ErpA (123 aa).

Iron-sulfur cluster-binding residues include C51, C115, and C117.

Belongs to the HesB/IscA family. Homodimer. Iron-sulfur cluster serves as cofactor.

Its function is as follows. Required for insertion of 4Fe-4S clusters. The polypeptide is Putative iron-sulfur cluster insertion protein ErpA (Bordetella avium (strain 197N)).